The following is a 446-amino-acid chain: MRKHFGTDGIRGRANVVITPELALKVGQAAGVIFQRGDHRHRVVIGKDTRLSGYMIETALVAGFTSVGMDVLLLGPMPTPAVAMLTRSMRADIGVMISASHNPYEDNGIKLFGPDGFKLNDDLELEIESLIDGDMRNRLSASRDLGRAKRIESVHARYIEFAKRTLPRHVTLDGLRVVVDCANGAAYRVAPETLWELGAEVISIGVEPDGFNINHDVGSTAPETLVQKVRELRADVGIALDGDADRVLIVDEKGQKVDGDQLMAAVARSWQEDERLTQPGLVATIMSNLGLERYINSIGLTLARTAVGDRYVLEHMRQHGYNLGGEQSGHIIMSDYATTGDGLVAALQLLSVVKRRNLPVSEVCHCFEPLPQILKNVRFRSGEPLRADSVVTAIAHAKDRLGQSGRLVIRPSGTEPVIRVMAEGDDRDLVAEVVDEVVDAVTRAAA.

Ser-100 (phosphoserine intermediate) is an active-site residue. Residues Ser-100, Asp-241, Asp-243, and Asp-245 each coordinate Mg(2+). Position 100 is a phosphoserine (Ser-100).

It belongs to the phosphohexose mutase family. Mg(2+) serves as cofactor. Post-translationally, activated by phosphorylation.

It catalyses the reaction alpha-D-glucosamine 1-phosphate = D-glucosamine 6-phosphate. Catalyzes the conversion of glucosamine-6-phosphate to glucosamine-1-phosphate. The polypeptide is Phosphoglucosamine mutase (Methylorubrum extorquens (strain CM4 / NCIMB 13688) (Methylobacterium extorquens)).